The chain runs to 488 residues: UDP-N-acetylmuramate--L-alanine ligase (488 aa).

Residue 129 to 135 (GTHGKTT) participates in ATP binding.

Belongs to the MurCDEF family.

The protein resides in the cytoplasm. The enzyme catalyses UDP-N-acetyl-alpha-D-muramate + L-alanine + ATP = UDP-N-acetyl-alpha-D-muramoyl-L-alanine + ADP + phosphate + H(+). It participates in cell wall biogenesis; peptidoglycan biosynthesis. In terms of biological role, cell wall formation. This chain is UDP-N-acetylmuramate--L-alanine ligase, found in Chromohalobacter salexigens (strain ATCC BAA-138 / DSM 3043 / CIP 106854 / NCIMB 13768 / 1H11).